A 618-amino-acid polypeptide reads, in one-letter code: Serine/threonine-protein kinase TNNI3K (618 aa).

Glycine 2 is lipidated: N-myristoyl glycine. Positions 21 to 51 (SESYVITIERLEDDLKIKEKELTELRNIFGS) form a coiled coil. ANK repeat units follow at residues 66 to 96 (NGLS…RPSR), 100 to 129 (NGFT…DIQQ), 133 to 162 (GGLT…NVNI), 166 to 195 (VFFT…DVNV), 199 to 228 (VGDR…KADV), 234 to 263 (EDHV…EVQP), 269 to 298 (YGDT…TESL), 304 to 335 (FSET…NINH), 339 to 368 (DGHT…DMNL), and 381 to 410 (DEQT…PQDE). A Protein kinase domain is found at 463-618 (IEFHEIIGSG…TAHTIYLLAP (156 aa)). ATP is bound by residues 469–477 (IGSGSFGKV) and lysine 490. The Proton acceptor role is filled by aspartate 588.

Belongs to the protein kinase superfamily. TKL Ser/Thr protein kinase family. MAP kinase kinase kinase subfamily. As to quaternary structure, interacts with TNNI3, ACTC, ACTA1, MYBPC3, AIP, FABP3 and HADHB. The cofactor is Mg(2+). In terms of processing, autophosphorylated.

The protein localises to the nucleus. It localises to the cytoplasm. The catalysed reaction is L-seryl-[protein] + ATP = O-phospho-L-seryl-[protein] + ADP + H(+). It carries out the reaction L-threonyl-[protein] + ATP = O-phospho-L-threonyl-[protein] + ADP + H(+). Its function is as follows. May play a role in cardiac physiology. The protein is Serine/threonine-protein kinase TNNI3K of Pongo abelii (Sumatran orangutan).